Reading from the N-terminus, the 572-residue chain is Isocitrate dehydrogenase kinase/phosphatase (572 aa).

Residues 317–323 and Lys-338 contribute to the ATP site; that span reads APGVRGM. Asp-373 is an active-site residue.

Belongs to the AceK family.

Its subcellular location is the cytoplasm. The catalysed reaction is L-seryl-[isocitrate dehydrogenase] + ATP = O-phospho-L-seryl-[isocitrate dehydrogenase] + ADP + H(+). Its function is as follows. Bifunctional enzyme which can phosphorylate or dephosphorylate isocitrate dehydrogenase (IDH) on a specific serine residue. This is a regulatory mechanism which enables bacteria to bypass the Krebs cycle via the glyoxylate shunt in response to the source of carbon. When bacteria are grown on glucose, IDH is fully active and unphosphorylated, but when grown on acetate or ethanol, the activity of IDH declines drastically concomitant with its phosphorylation. This is Isocitrate dehydrogenase kinase/phosphatase from Ectopseudomonas mendocina (strain ymp) (Pseudomonas mendocina).